Here is a 215-residue protein sequence, read N- to C-terminus: MSKTIHYQKTHFITSAPDIRHLPEDEGIEVAFAGRSNAGKSSALNRLTNQKSLAKTSKTPGRTQLINLFKVEENCHIVDLPGYGFAQVPLEMKKKWQKSLGEYLQKRQCLQGLVVLMDIRHPLKDIDQQLVFWAVDQNIPVQILLTKADKLKSGARKAQVLKVREAAVDFGGEVEVDAFSSLKGIGVDKLRAKLDEWFAPAFELDDEFIEDLDVE.

In terms of domain architecture, EngB-type G spans 26–200; it reads EGIEVAFAGR…RAKLDEWFAP (175 aa). Residues 34 to 41, 61 to 65, 79 to 82, 146 to 149, and 179 to 181 each bind GTP; these read GRSNAGKS, GRTQL, DLPG, TKAD, and FSS. 2 residues coordinate Mg(2+): Ser-41 and Thr-63.

This sequence belongs to the TRAFAC class TrmE-Era-EngA-EngB-Septin-like GTPase superfamily. EngB GTPase family. The cofactor is Mg(2+).

In terms of biological role, necessary for normal cell division and for the maintenance of normal septation. This Aliivibrio fischeri (strain MJ11) (Vibrio fischeri) protein is Probable GTP-binding protein EngB.